A 1235-amino-acid polypeptide reads, in one-letter code: ATP-dependent helicase/nuclease subunit A (1235 aa).

One can recognise a UvrD-like helicase ATP-binding domain in the interval 3–471 (TKWTETQKSA…IKLSENFRSR (469 aa)). Residue 24–31 (AGAGTGKT) participates in ATP binding. Residues 509 to 808 (PFEGNCGGDV…RIMSIHKSKG (300 aa)) form the UvrD-like helicase C-terminal domain.

This sequence belongs to the helicase family. AddA subfamily. Heterodimer of AddA and AddB/RexB. The cofactor is Mg(2+).

It catalyses the reaction Couples ATP hydrolysis with the unwinding of duplex DNA by translocating in the 3'-5' direction.. The enzyme catalyses ATP + H2O = ADP + phosphate + H(+). Functionally, the heterodimer acts as both an ATP-dependent DNA helicase and an ATP-dependent, dual-direction single-stranded exonuclease. Recognizes the chi site generating a DNA molecule suitable for the initiation of homologous recombination. The AddA nuclease domain is required for chi fragment generation; this subunit has the helicase and 3' -&gt; 5' nuclease activities. This chain is ATP-dependent helicase/nuclease subunit A, found in Clostridium kluyveri (strain ATCC 8527 / DSM 555 / NBRC 12016 / NCIMB 10680 / K1).